The sequence spans 289 residues: Protease HtpX homolog (289 aa).

A run of 2 helical transmembrane segments spans residues 11–31 and 34–54; these read AALF…IAAG and STTP…YGYW. A Zn(2+)-binding site is contributed by His138. Residue Glu139 is part of the active site. His142 is a Zn(2+) binding site. Helical transmembrane passes span 152 to 172 and 182 to 202; these read SVVA…LIFG and LATI…QMAI. Glu207 serves as a coordination point for Zn(2+).

It belongs to the peptidase M48B family. The cofactor is Zn(2+).

The protein localises to the cell membrane. The chain is Protease HtpX homolog from Paenarthrobacter aurescens (strain TC1).